The primary structure comprises 121 residues: Large ribosomal subunit protein bL12 (121 aa).

The protein belongs to the bacterial ribosomal protein bL12 family. Homodimer. Part of the ribosomal stalk of the 50S ribosomal subunit. Forms a multimeric L10(L12)X complex, where L10 forms an elongated spine to which 2 to 4 L12 dimers bind in a sequential fashion. Binds GTP-bound translation factors.

In terms of biological role, forms part of the ribosomal stalk which helps the ribosome interact with GTP-bound translation factors. Is thus essential for accurate translation. The protein is Large ribosomal subunit protein bL12 of Pectobacterium atrosepticum (strain SCRI 1043 / ATCC BAA-672) (Erwinia carotovora subsp. atroseptica).